The sequence spans 263 residues: CRISPR-associated protein Cas5 2 (263 aa).

It belongs to the CRISPR-associated protein Cas5 family. Subtype I-A/Apern subfamily. Part of the aCascade ribonucleoprotein complex, minimally composed of Csa2 and Cas5a, which binds crRNA. Other possible components of aCascade in strain P1 are Cas6b (SSO1437) and Csa5 (SSO1443), while SSO1399, Cas5b (SSO1400) and SSO1401 have sometimes been seen weakly associated. Csa2 is probably the major RNA-binding subunit. The Csa2-Cas5a-crRNA complex also binds target DNA homologous to crRNA, probably forming an R-loop. Purified aCascade forms a filament about 6 nm in width.

Its function is as follows. CRISPR (clustered regularly interspaced short palindromic repeat) is an adaptive immune system that provides protection against mobile genetic elements (viruses, transposable elements and conjugative plasmids). CRISPR clusters contain spacers, sequences complementary to antecedent mobile elements, and target invading nucleic acids. CRISPR clusters are transcribed and processed into CRISPR RNA (crRNA). The protein is CRISPR-associated protein Cas5 2 (cas5b) of Saccharolobus solfataricus (strain ATCC 35092 / DSM 1617 / JCM 11322 / P2) (Sulfolobus solfataricus).